A 425-amino-acid chain; its full sequence is MGETAQIQAKFFTKDERYSVPDTPFSIAGSTTPEQLSSLINALLKESSASPDQDEQPAFDFLINGELLRLTLEEHLETKEIPQETIVHLEYLEKCPPPSPVDSLIHDDWVSAVHASEAGILSGCYDNTLHIWDTATGTRRLTIPGHLGPIKSVKWVAVAEPPCTFVSTSHDETAMLWQWDRRTNAVESVQVCRGHARSVDCVDVSWNGAKFVTGSFDHMLKVWSADPDSTDTDHGQDGSEEGSRKKQKTVDGKAKTRVPVLTLAGHHEAVTGVQWTDEGEVATCSMDHTLRIWDVELGGMKSQLAGSKAFLGISYSRLNRQIVSASSDRHVRLWDPRTKDGTIVKCSYTSHAGWVSAVHWAPNSDHQFISGSYDTLMKLWDARSPKAPLYDMSGHEDKVLAVDWSLGKYMISGGADNQLKIFEHK.

Residues 7–93 (IQAKFFTKDE…ETIVHLEYLE (87 aa)) are ubiquitin-like (UBL) domain. WD repeat units follow at residues 105–142 (IHDD…RRLT), 145–187 (GHLG…NAVE), 194–233 (GHAR…TDTD), 265–303 (GHHE…MKSQ), 305–344 (AGSK…GTIV), 350–390 (SHAG…APLY), and 394–425 (GHED…FEHK). The segment at 227 to 253 (PDSTDTDHGQDGSEEGSRKKQKTVDGK) is disordered. A compositionally biased stretch (basic and acidic residues) spans 231–253 (DTDHGQDGSEEGSRKKQKTVDGK).

It belongs to the WD repeat WDR12/YTM1 family.

It localises to the nucleus. The protein localises to the nucleolus. The protein resides in the nucleoplasm. In terms of biological role, required for maturation of ribosomal RNAs and formation of the large ribosomal subunit. The sequence is that of Ribosome biogenesis protein WDR12 homolog from Ixodes scapularis (Black-legged tick).